A 748-amino-acid polypeptide reads, in one-letter code: 5-methyltetrahydropteroyltriglutamate--homocysteine methyltransferase (748 aa).

5-methyltetrahydropteroyltri-L-glutamate-binding positions include 18–21 and Lys-112; that span reads REWK. Residues 420-422 and Glu-473 contribute to the L-homocysteine site; that span reads IGS. Residues 420–422 and Glu-473 contribute to the L-methionine site; that span reads IGS. Residue Trp-550 coordinates 5-methyltetrahydropteroyltri-L-glutamate. An L-homocysteine-binding site is contributed by Asp-588. Asp-588 contributes to the L-methionine binding site. A 5-methyltetrahydropteroyltri-L-glutamate-binding site is contributed by Glu-594. Zn(2+) contacts are provided by His-630, Cys-632, and Glu-654. The Proton donor role is filled by His-683. Cys-715 contributes to the Zn(2+) binding site.

The protein belongs to the vitamin-B12 independent methionine synthase family. The cofactor is Zn(2+).

It catalyses the reaction 5-methyltetrahydropteroyltri-L-glutamate + L-homocysteine = tetrahydropteroyltri-L-glutamate + L-methionine. It functions in the pathway amino-acid biosynthesis; L-methionine biosynthesis via de novo pathway; L-methionine from L-homocysteine (MetE route): step 1/1. In terms of biological role, catalyzes the transfer of a methyl group from 5-methyltetrahydrofolate to homocysteine resulting in methionine formation. The polypeptide is 5-methyltetrahydropteroyltriglutamate--homocysteine methyltransferase (Staphylococcus epidermidis (strain ATCC 12228 / FDA PCI 1200)).